The chain runs to 310 residues: Porphobilinogen deaminase (310 aa).

C242 bears the S-(dipyrrolylmethanemethyl)cysteine mark.

This sequence belongs to the HMBS family. As to quaternary structure, monomer. The cofactor is dipyrromethane.

It catalyses the reaction 4 porphobilinogen + H2O = hydroxymethylbilane + 4 NH4(+). It participates in porphyrin-containing compound metabolism; protoporphyrin-IX biosynthesis; coproporphyrinogen-III from 5-aminolevulinate: step 2/4. Tetrapolymerization of the monopyrrole PBG into the hydroxymethylbilane pre-uroporphyrinogen in several discrete steps. This Alcanivorax borkumensis (strain ATCC 700651 / DSM 11573 / NCIMB 13689 / SK2) protein is Porphobilinogen deaminase.